The chain runs to 260 residues: (R)-2-hydroxyglutaryl-CoA dehydratase activating ATPase (260 aa).

An ATP-binding site is contributed by 12-16 (STASK). [4Fe-4S] cluster is bound by residues C127 and C166. ATP-binding residues include Q220 and Q243.

The protein belongs to the HgdC family. Homodimer. Requires [4Fe-4S] cluster as cofactor. Mg(2+) is required as a cofactor.

The enzyme catalyses ATP + H2O = ADP + phosphate + H(+). It functions in the pathway amino-acid degradation; L-glutamate degradation via hydroxyglutarate pathway; crotonoyl-CoA from L-glutamate: step 4/5. Its activity is regulated as follows. Inactivated by exposure to air within less than 15 minutes. Involved in the fermentation of L-glutamate via the hydroxyglutarate pathway. HgdC (CompA) has a very low ATPase activity, whose the role is to activate dehydratase HgdA-HgdB complex and then maintain an appropriate redox state via an ATP-dependent electron transfer. The dehydratase requires only catalytic amounts of ATP and substoichiometric amounts of HgdC (CompA) to be functional. This is (R)-2-hydroxyglutaryl-CoA dehydratase activating ATPase from Acidaminococcus fermentans (strain ATCC 25085 / DSM 20731 / CCUG 9996 / CIP 106432 / VR4).